A 243-amino-acid polypeptide reads, in one-letter code: Protein S40-7 (243 aa).

Disordered regions lie at residues 1-68 and 107-143; these read MNKN…KSGL and SSTASSSSSSGGGASAGSSSSARAIPTAPKPPQERLP. Polar residues predominate over residues 10–20; sequence SSPSSLATISD. The segment covering 22–32 has biased composition (acidic residues); the sequence is ADGELNEDDIF. Residues 47-67 are compositionally biased toward polar residues; it reads PVSSPAKQQTPARQLQRSKSG.

It belongs to the senescence regulator S40 family.

Its subcellular location is the cytoplasm. The protein is Protein S40-7 of Arabidopsis thaliana (Mouse-ear cress).